A 184-amino-acid polypeptide reads, in one-letter code: ATP synthase subunit b, chloroplastic (184 aa).

Residues 27-49 (LATNLINLSVVFGVLIFFGKGVL) traverse the membrane as a helical segment.

The protein belongs to the ATPase B chain family. F-type ATPases have 2 components, F(1) - the catalytic core - and F(0) - the membrane proton channel. F(1) has five subunits: alpha(3), beta(3), gamma(1), delta(1), epsilon(1). F(0) has four main subunits: a(1), b(1), b'(1) and c(10-14). The alpha and beta chains form an alternating ring which encloses part of the gamma chain. F(1) is attached to F(0) by a central stalk formed by the gamma and epsilon chains, while a peripheral stalk is formed by the delta, b and b' chains.

It localises to the plastid. It is found in the chloroplast thylakoid membrane. Functionally, f(1)F(0) ATP synthase produces ATP from ADP in the presence of a proton or sodium gradient. F-type ATPases consist of two structural domains, F(1) containing the extramembraneous catalytic core and F(0) containing the membrane proton channel, linked together by a central stalk and a peripheral stalk. During catalysis, ATP synthesis in the catalytic domain of F(1) is coupled via a rotary mechanism of the central stalk subunits to proton translocation. Component of the F(0) channel, it forms part of the peripheral stalk, linking F(1) to F(0). The chain is ATP synthase subunit b, chloroplastic from Aethionema cordifolium (Lebanon stonecress).